A 30-amino-acid polypeptide reads, in one-letter code: Cysteine-rich venom protein mossambin (30 aa).

The tract at residues 1-30 (NVDFNSESTRRKKKQNEIVDLHNSLRRTVN) is disordered.

It belongs to the CRISP family. Post-translationally, contains 8 disulfide bonds. In terms of tissue distribution, expressed by the venom gland.

Its subcellular location is the secreted. Its function is as follows. Inhibits calcium-activated potassium channels (KCa), voltage-gated potassium channel (Kv), and the calcium release channel/ryanodine receptor (RyR). The chain is Cysteine-rich venom protein mossambin from Naja mossambica (Mozambique spitting cobra).